The following is a 174-amino-acid chain: Co-chaperone protein HscB homolog (174 aa).

Residues 2-74 form the J domain; that stretch reads NYFELFSLLP…IQRAEHLLAL (73 aa).

The protein belongs to the HscB family. As to quaternary structure, interacts with HscA and stimulates its ATPase activity.

In terms of biological role, co-chaperone involved in the maturation of iron-sulfur cluster-containing proteins. Seems to help targeting proteins to be folded toward HscA. The chain is Co-chaperone protein HscB homolog from Shewanella pealeana (strain ATCC 700345 / ANG-SQ1).